A 355-amino-acid polypeptide reads, in one-letter code: NADH dehydrogenase-like protein YutJ (355 aa).

It belongs to the NADH dehydrogenase family. FAD is required as a cofactor.

In Bacillus subtilis (strain 168), this protein is NADH dehydrogenase-like protein YutJ (yutJ).